The primary structure comprises 199 residues: Imidazoleglycerol-phosphate dehydratase (199 aa).

The protein belongs to the imidazoleglycerol-phosphate dehydratase family.

It localises to the cytoplasm. It carries out the reaction D-erythro-1-(imidazol-4-yl)glycerol 3-phosphate = 3-(imidazol-4-yl)-2-oxopropyl phosphate + H2O. It participates in amino-acid biosynthesis; L-histidine biosynthesis; L-histidine from 5-phospho-alpha-D-ribose 1-diphosphate: step 6/9. The chain is Imidazoleglycerol-phosphate dehydratase from Paramagnetospirillum magneticum (strain ATCC 700264 / AMB-1) (Magnetospirillum magneticum).